We begin with the raw amino-acid sequence, 435 residues long: Serine--tRNA ligase (435 aa).

242-244 (TAE) is an L-serine binding site. 273–275 (RSE) is an ATP binding site. An L-serine-binding site is contributed by E296. ATP is bound at residue 360 to 363 (EISS). Residue S396 participates in L-serine binding.

The protein belongs to the class-II aminoacyl-tRNA synthetase family. Type-1 seryl-tRNA synthetase subfamily. In terms of assembly, homodimer. The tRNA molecule binds across the dimer.

The protein localises to the cytoplasm. The enzyme catalyses tRNA(Ser) + L-serine + ATP = L-seryl-tRNA(Ser) + AMP + diphosphate + H(+). It catalyses the reaction tRNA(Sec) + L-serine + ATP = L-seryl-tRNA(Sec) + AMP + diphosphate + H(+). Its pathway is aminoacyl-tRNA biosynthesis; selenocysteinyl-tRNA(Sec) biosynthesis; L-seryl-tRNA(Sec) from L-serine and tRNA(Sec): step 1/1. Functionally, catalyzes the attachment of serine to tRNA(Ser). Is also able to aminoacylate tRNA(Sec) with serine, to form the misacylated tRNA L-seryl-tRNA(Sec), which will be further converted into selenocysteinyl-tRNA(Sec). In Vibrio campbellii (strain ATCC BAA-1116), this protein is Serine--tRNA ligase.